Consider the following 405-residue polypeptide: S-adenosylmethionine synthase (405 aa).

139–144 (GQGSVD) serves as a coordination point for ATP.

The protein belongs to the AdoMet synthase 2 family. Mg(2+) is required as a cofactor.

It carries out the reaction L-methionine + ATP + H2O = S-adenosyl-L-methionine + phosphate + diphosphate. The protein operates within amino-acid biosynthesis; S-adenosyl-L-methionine biosynthesis; S-adenosyl-L-methionine from L-methionine: step 1/1. Its function is as follows. Catalyzes the formation of S-adenosylmethionine from methionine and ATP. This Thermococcus onnurineus (strain NA1) protein is S-adenosylmethionine synthase.